Consider the following 659-residue polypeptide: Exoribonuclease 2 (659 aa).

Residues 189–531 (RENLTALHFV…NHRLIKAVLA (343 aa)) form the RNB domain. Positions 576-658 (NVEFNAEVQD…ATRSIVGEIL (83 aa)) constitute an S1 motif domain.

The protein belongs to the RNR ribonuclease family. RNase II subfamily.

It localises to the cytoplasm. It carries out the reaction Exonucleolytic cleavage in the 3'- to 5'-direction to yield nucleoside 5'-phosphates.. In terms of biological role, involved in mRNA degradation. Hydrolyzes single-stranded polyribonucleotides processively in the 3' to 5' direction. This chain is Exoribonuclease 2, found in Haemophilus influenzae (strain 86-028NP).